Reading from the N-terminus, the 81-residue chain is Small ribosomal subunit protein uS17 (81 aa).

The protein belongs to the universal ribosomal protein uS17 family. In terms of assembly, part of the 30S ribosomal subunit.

One of the primary rRNA binding proteins, it binds specifically to the 5'-end of 16S ribosomal RNA. In Protochlamydia amoebophila (strain UWE25), this protein is Small ribosomal subunit protein uS17.